A 328-amino-acid polypeptide reads, in one-letter code: Ribosomal RNA large subunit methyltransferase F (328 aa).

The tract at residues 1–38 (MTDTPKPPRKKPQRPAKPAAPREKATLHPRNRHQGHYD) is disordered.

This sequence belongs to the methyltransferase superfamily. METTL16/RlmF family.

It is found in the cytoplasm. The enzyme catalyses adenosine(1618) in 23S rRNA + S-adenosyl-L-methionine = N(6)-methyladenosine(1618) in 23S rRNA + S-adenosyl-L-homocysteine + H(+). Its function is as follows. Specifically methylates the adenine in position 1618 of 23S rRNA. In Pseudomonas syringae pv. tomato (strain ATCC BAA-871 / DC3000), this protein is Ribosomal RNA large subunit methyltransferase F.